We begin with the raw amino-acid sequence, 551 residues long: Formate--tetrahydrofolate ligase (551 aa).

65–72 (TPAGEGKT) is an ATP binding site.

Belongs to the formate--tetrahydrofolate ligase family.

It catalyses the reaction (6S)-5,6,7,8-tetrahydrofolate + formate + ATP = (6R)-10-formyltetrahydrofolate + ADP + phosphate. It participates in one-carbon metabolism; tetrahydrofolate interconversion. This Thermosipho melanesiensis (strain DSM 12029 / CIP 104789 / BI429) protein is Formate--tetrahydrofolate ligase.